Reading from the N-terminus, the 264-residue chain is Fructose-1,6-bisphosphatase/inositol-1-monophosphatase (264 aa).

4 residues coordinate Mg(2+): glutamate 70, aspartate 86, leucine 88, and aspartate 89. Residues 89 to 91 (DGT), arginine 185, and alanine 190 contribute to the substrate site. Aspartate 214 contacts Mg(2+).

It belongs to the inositol monophosphatase superfamily. FBPase class 4 family. The cofactor is Mg(2+).

It carries out the reaction beta-D-fructose 1,6-bisphosphate + H2O = beta-D-fructose 6-phosphate + phosphate. The enzyme catalyses a myo-inositol phosphate + H2O = myo-inositol + phosphate. Functionally, phosphatase with broad specificity; it can dephosphorylate fructose 1,6-bisphosphate, and both D and L isomers of inositol-1-phosphate (I-1-P). The sequence is that of Fructose-1,6-bisphosphatase/inositol-1-monophosphatase (suhB) from Aquifex aeolicus (strain VF5).